The primary structure comprises 120 residues: Small ribosomal subunit protein uS13 (120 aa).

Residues 94–120 (GLPLRGQRTRTNARTRKGPRKAIAGKK) form a disordered region.

Belongs to the universal ribosomal protein uS13 family. Part of the 30S ribosomal subunit. Forms a loose heterodimer with protein S19. Forms two bridges to the 50S subunit in the 70S ribosome.

Functionally, located at the top of the head of the 30S subunit, it contacts several helices of the 16S rRNA. In the 70S ribosome it contacts the 23S rRNA (bridge B1a) and protein L5 of the 50S subunit (bridge B1b), connecting the 2 subunits; these bridges are implicated in subunit movement. Contacts the tRNAs in the A and P-sites. This Azoarcus sp. (strain BH72) protein is Small ribosomal subunit protein uS13.